The sequence spans 708 residues: Glycogen [starch] synthase isoform 1 (708 aa).

UDP is bound at residue Arg-20. The residue at position 159 (Ser-159) is a Phosphoserine. The UDP-alpha-D-glucose site is built by His-193 and Arg-199. Alpha-D-glucose 6-phosphate-binding residues include His-280, Glu-281, Gln-283, His-286, and Lys-290. Residue Arg-320 participates in UDP binding. Arg-320 contacts UDP-alpha-D-glucose. Position 363 is a phosphoserine (Ser-363). Position 500 (His-500) interacts with alpha-D-glucose 6-phosphate. 3 residues coordinate UDP-alpha-D-glucose: Glu-509, Trp-511, and Gly-512. Thr-514 is a binding site for UDP. Position 560 is a phosphoserine (Ser-560). Alpha-D-glucose 6-phosphate contacts are provided by Arg-583 and Arg-587. Phosphoserine occurs at positions 651 and 655. Phosphoserine; by PKA occurs at positions 660 and 662. The tract at residues 687–708 (STNGAIDNDDDDNDTSAYYEDN) is disordered. The span at 693-708 (DNDDDDNDTSAYYEDN) shows a compositional bias: acidic residues.

It belongs to the glycosyltransferase 3 family.

It carries out the reaction [(1-&gt;4)-alpha-D-glucosyl](n) + UDP-alpha-D-glucose = [(1-&gt;4)-alpha-D-glucosyl](n+1) + UDP + H(+). Its pathway is glycan biosynthesis; glycogen biosynthesis. With respect to regulation, allosteric activation by glucose-6-phosphate, and phosphorylation by a cAMP-dependent kinase. Its function is as follows. Glycogen synthase participates in the glycogen biosynthetic process along with glycogenin and glycogen branching enzyme. Extends the primer composed of a few glucose units formed by glycogenin by adding new glucose units to it. In this context, glycogen synthase transfers the glycosyl residue from UDP-Glc to the non-reducing end of alpha-1,4-glucan. The sequence is that of Glycogen [starch] synthase isoform 1 (GSY1) from Saccharomyces cerevisiae (strain ATCC 204508 / S288c) (Baker's yeast).